The following is a 421-amino-acid chain: Synaptotagmin-12 (421 aa).

The Vesicular portion of the chain corresponds to 1 to 18; that stretch reads MAVDVTEYHLSVIKSPPG. A helical transmembrane segment spans residues 19–39; that stretch reads WEVGVYAAGALALLGIAAVSL. The Cytoplasmic segment spans residues 40-421; it reads WKLWTSGSFP…VSMWHPVRRN (382 aa). Ser-97 is modified (phosphoserine; by PKA). Phosphoserine occurs at positions 99 and 214. 2 consecutive C2 domains span residues 152 to 272 and 283 to 416; these read TLGQ…SGWL and AVGE…SMWH.

Belongs to the synaptotagmin family. As to quaternary structure, homodimer. Can also form heterodimers. Interacts with SYT1. Post-translationally, phosphorylation of Ser-97 is required for mossy-fiber long-term potentiation. In terms of tissue distribution, expressed in the brain, specifically by neurons in the hippocampus, and in the adrenal medulla (at protein level).

It localises to the cytoplasmic vesicle. The protein localises to the secretory vesicle. The protein resides in the synaptic vesicle membrane. Its function is as follows. Synaptic vesicle phosphoprotein that enhances spontaneous neurotransmitter release but does not effect induced neurotransmitter release. Unlike other synaptotagmins, it does not bind Ca(2+) or phospholipids. Essential for mossy-fiber long-term potentiation in the hippocampus. The sequence is that of Synaptotagmin-12 from Mus musculus (Mouse).